A 1475-amino-acid polypeptide reads, in one-letter code: Alpha-glucan water dikinase, chloroplastic (1475 aa).

The N-terminal 85 residues, 1–85, are a transit peptide targeting the chloroplast; sequence MSNSIGRNVL…HRPVLITPRA (85 aa). Residue histidine 1077 is the Tele-phosphohistidine intermediate of the active site.

This sequence belongs to the PEP-utilizing enzyme family. As to quaternary structure, homodimer. It depends on Mg(2+) as a cofactor.

It localises to the plastid. Its subcellular location is the chloroplast. The catalysed reaction is [(1-&gt;4)-alpha-D-glucosyl](n) + n ATP + n H2O = [(1-&gt;4)-6-phospho-alpha-D-glucosyl](n) + n AMP + n phosphate + 2n H(+). Functionally, mediates the incorporation of phosphate into starch-like alpha-glucan, mostly at the C-6 position of glucose units. Acts as an overall regulator of starch mobilization. Required for starch degradation, suggesting that the phosphate content of starch regulates its degradability. This Citrus reticulata (Tangerine) protein is Alpha-glucan water dikinase, chloroplastic (R1).